We begin with the raw amino-acid sequence, 191 residues long: Adenylate kinase (191 aa).

Gly-11–Thr-16 contributes to the ATP binding site. An NMP region spans residues Ser-31–Leu-60. Residues Thr-32, Arg-37, Gln-58–Leu-60, Gly-86–Arg-89, and Gln-93 contribute to the AMP site. Residues Lys-127–Asp-137 are LID. Arg-128 serves as a coordination point for ATP. Residues Arg-134 and Arg-145 each contribute to the AMP site. Position 173 (Asn-173) interacts with ATP.

It belongs to the adenylate kinase family. As to quaternary structure, monomer.

The protein resides in the cytoplasm. The catalysed reaction is AMP + ATP = 2 ADP. It participates in purine metabolism; AMP biosynthesis via salvage pathway; AMP from ADP: step 1/1. Functionally, catalyzes the reversible transfer of the terminal phosphate group between ATP and AMP. Plays an important role in cellular energy homeostasis and in adenine nucleotide metabolism. The polypeptide is Adenylate kinase (Azobacteroides pseudotrichonymphae genomovar. CFP2).